A 139-amino-acid chain; its full sequence is Exodeoxyribonuclease 7 small subunit (139 aa).

Disordered regions lie at residues 1-26 and 82-139; these read MAKK…LGDF and DAEG…EDDE. Positions 130 to 139 are enriched in acidic residues; sequence ADLDSAEDDE.

This sequence belongs to the XseB family. As to quaternary structure, heterooligomer composed of large and small subunits.

The protein localises to the cytoplasm. The catalysed reaction is Exonucleolytic cleavage in either 5'- to 3'- or 3'- to 5'-direction to yield nucleoside 5'-phosphates.. Its function is as follows. Bidirectionally degrades single-stranded DNA into large acid-insoluble oligonucleotides, which are then degraded further into small acid-soluble oligonucleotides. The protein is Exodeoxyribonuclease 7 small subunit of Rhodopirellula baltica (strain DSM 10527 / NCIMB 13988 / SH1).